Reading from the N-terminus, the 114-residue chain is UPF0145 protein SSO1976 (114 aa).

It belongs to the UPF0145 family.

The sequence is that of UPF0145 protein SSO1976 from Saccharolobus solfataricus (strain ATCC 35092 / DSM 1617 / JCM 11322 / P2) (Sulfolobus solfataricus).